The chain runs to 147 residues: UPF0178 protein Patl_1318 (147 aa).

It belongs to the UPF0178 family.

This is UPF0178 protein Patl_1318 from Pseudoalteromonas atlantica (strain T6c / ATCC BAA-1087).